Here is a 168-residue protein sequence, read N- to C-terminus: Phosphopantetheine adenylyltransferase (168 aa).

T17 serves as a coordination point for substrate. ATP-binding positions include 17–18 (TF) and H25. Positions 49, 81, and 95 each coordinate substrate. ATP contacts are provided by residues 96-98 (GLR), E106, and 131-137 (LMYISST).

The protein belongs to the bacterial CoaD family. In terms of assembly, homohexamer. It depends on Mg(2+) as a cofactor.

The protein resides in the cytoplasm. It catalyses the reaction (R)-4'-phosphopantetheine + ATP + H(+) = 3'-dephospho-CoA + diphosphate. Its pathway is cofactor biosynthesis; coenzyme A biosynthesis; CoA from (R)-pantothenate: step 4/5. Its function is as follows. Reversibly transfers an adenylyl group from ATP to 4'-phosphopantetheine, yielding dephospho-CoA (dPCoA) and pyrophosphate. The sequence is that of Phosphopantetheine adenylyltransferase from Legionella pneumophila (strain Paris).